A 246-amino-acid chain; its full sequence is Probable transcriptional regulatory protein PM0980 (246 aa).

Belongs to the TACO1 family.

It is found in the cytoplasm. The sequence is that of Probable transcriptional regulatory protein PM0980 from Pasteurella multocida (strain Pm70).